A 151-amino-acid chain; its full sequence is Cyanate hydratase (151 aa).

Residues Arg-92, Glu-95, and Ser-118 contribute to the active site.

This sequence belongs to the cyanase family.

It carries out the reaction cyanate + hydrogencarbonate + 3 H(+) = NH4(+) + 2 CO2. In terms of biological role, catalyzes the reaction of cyanate with bicarbonate to produce ammonia and carbon dioxide. This Coprinopsis cinerea (strain Okayama-7 / 130 / ATCC MYA-4618 / FGSC 9003) (Inky cap fungus) protein is Cyanate hydratase.